The following is a 491-amino-acid chain: MTTWDKCLKKIKKNLSTFEYKTWIKPIHVEQNSNLFTVYCNNEYFKKHIKSKYGNLILSTIQECHGNDLIIEYSNKKFSGKKITEVITAGPQANFFSTTSVEIKDESEDTKVVQEPKISKKSNTKDFSSSQELFGFDEAMLITAKEDEEYSFGLPLKEKYVFDSFVVGDANKIARAAAMQVSINPGKLHNPLFIYGGSGLGKTHLMQAIGNHAREVNPNAKIIYTNSEQFIKDYVNSIRLQDQDEFQRVYRSADILLIDDIQFIAGKEGTAQEFFHTFNALYENGKQIILTSDKYPNEIEGLEERLVSRFGYGLTVSVDMPDLETRIAILLKKAHDLGQKLPNETAAFIAENVRTNVRELEGALNRVLTTSKFNHKDPTIEVAQACLRDVIKIQEKKVKIDNIQKVVADFYRIRVKDLTSNQRSRNIARPRQIAMSLARELTSHSLPEIGNAFGGRDHTTVMHAVKAITKLRQSNTSISDDYELLLDKISR.

The domain I, interacts with DnaA modulators stretch occupies residues 1 to 69 (MTTWDKCLKK…TIQECHGNDL (69 aa)). The segment at 69-154 (LIIEYSNKKF…KEDEEYSFGL (86 aa)) is domain II. Residues 155–371 (PLKEKYVFDS…GALNRVLTTS (217 aa)) are domain III, AAA+ region. ATP-binding residues include glycine 199, glycine 201, lysine 202, and threonine 203. A domain IV, binds dsDNA region spans residues 372–491 (KFNHKDPTIE…YELLLDKISR (120 aa)).

It belongs to the DnaA family. In terms of assembly, oligomerizes as a right-handed, spiral filament on DNA at oriC.

Its subcellular location is the cytoplasm. In terms of biological role, plays an essential role in the initiation and regulation of chromosomal replication. ATP-DnaA binds to the origin of replication (oriC) to initiate formation of the DNA replication initiation complex once per cell cycle. Binds the DnaA box (a 9 base pair repeat at the origin) and separates the double-stranded (ds)DNA. Forms a right-handed helical filament on oriC DNA; dsDNA binds to the exterior of the filament while single-stranded (ss)DNA is stabiized in the filament's interior. The ATP-DnaA-oriC complex binds and stabilizes one strand of the AT-rich DNA unwinding element (DUE), permitting loading of DNA polymerase. After initiation quickly degrades to an ADP-DnaA complex that is not apt for DNA replication. Binds acidic phospholipids. In Francisella tularensis subsp. novicida (strain U112), this protein is Chromosomal replication initiator protein DnaA.